Reading from the N-terminus, the 218-residue chain is MERYNLKAEVRKDTGKGVARKLRRNGLIPGVIYGKTRKPQPLAVDAKDLNKVVGGNAILDMTLVDGDKEEKETAVVKDLQRDPVQGNILHVDFQHISMTDKLTVSVPVHIVGNARGVVAGGVLQQLAREIEVECLPTDIPDEIEVDITDLGLGDSLSVGDIEPPANTDFITPEDEVIVTIVAPSEAVEEEVPAEDEEIMPEPEVIGEEDEGDEEEPEE.

Positions 186 to 218 are disordered; sequence AVEEEVPAEDEEIMPEPEVIGEEDEGDEEEPEE.

The protein belongs to the bacterial ribosomal protein bL25 family. CTC subfamily. As to quaternary structure, part of the 50S ribosomal subunit; part of the 5S rRNA/L5/L18/L25 subcomplex. Contacts the 5S rRNA. Binds to the 5S rRNA independently of L5 and L18.

Functionally, this is one of the proteins that binds to the 5S RNA in the ribosome where it forms part of the central protuberance. The sequence is that of Large ribosomal subunit protein bL25 from Halothermothrix orenii (strain H 168 / OCM 544 / DSM 9562).